Consider the following 126-residue polypeptide: Small ribosomal subunit protein uS13 (126 aa).

Positions 99–126 (LRGQSTKNNARTRKGKRKTVANKKRVTK) are disordered. Residues 108–126 (ARTRKGKRKTVANKKRVTK) are compositionally biased toward basic residues.

This sequence belongs to the universal ribosomal protein uS13 family. As to quaternary structure, part of the 30S ribosomal subunit. Forms a loose heterodimer with protein S19. Forms two bridges to the 50S subunit in the 70S ribosome.

In terms of biological role, located at the top of the head of the 30S subunit, it contacts several helices of the 16S rRNA. In the 70S ribosome it contacts the 23S rRNA (bridge B1a) and protein L5 of the 50S subunit (bridge B1b), connecting the 2 subunits; these bridges are implicated in subunit movement. Contacts the tRNAs in the A and P-sites. The sequence is that of Small ribosomal subunit protein uS13 from Azobacteroides pseudotrichonymphae genomovar. CFP2.